A 299-amino-acid polypeptide reads, in one-letter code: Acarbose 7(IV)-phosphotransferase (299 aa).

It belongs to the carbohydrate kinase PfkB family.

The catalysed reaction is acarbose + ATP = acarbose 7(IV)-phosphate + ADP + H(+). In terms of biological role, catalyzes the phosphorylation of the alpha-glucosidase inhibitor acarbose. Phosphorylation of acarbose could be a resistance-like self-protection mechanism. This is Acarbose 7(IV)-phosphotransferase from Actinoplanes sp. (strain ATCC 31044 / CBS 674.73 / SE50/110).